The following is a 404-amino-acid chain: Tryptophan synthase beta chain (404 aa).

The residue at position 94 (lysine 94) is an N6-(pyridoxal phosphate)lysine.

The protein belongs to the TrpB family. In terms of assembly, tetramer of two alpha and two beta chains. The cofactor is pyridoxal 5'-phosphate.

The enzyme catalyses (1S,2R)-1-C-(indol-3-yl)glycerol 3-phosphate + L-serine = D-glyceraldehyde 3-phosphate + L-tryptophan + H2O. It functions in the pathway amino-acid biosynthesis; L-tryptophan biosynthesis; L-tryptophan from chorismate: step 5/5. In terms of biological role, the beta subunit is responsible for the synthesis of L-tryptophan from indole and L-serine. This Staphylococcus saprophyticus subsp. saprophyticus (strain ATCC 15305 / DSM 20229 / NCIMB 8711 / NCTC 7292 / S-41) protein is Tryptophan synthase beta chain.